The primary structure comprises 329 residues: MKGELRSLLLPELRLFNEAIKGILSSPLSGKLGIAVSGGSDSLALLLLGAVSDFPVEAVTVDHGMRPEAAEEARFVAQICQQIGVPHQILTTKIEANGEGMQAAARIRRYALMAEWAKEKNVGALMTAHHADDQAETFLMRAARGSGLNGLAAIRPDVVITAEGQKLRLLRPLLGFTRSALAEIVEKAGFTFVSDPSNDNPHYDRTHFRRLLKASPWINRQHIAEAARYCQQSEEAIEWITAKEAAARIRKKGEVLYLDPTELPIEILRRLVLRAMETITGNTALRGSALSRFIRSLQQGKKVMLADVIGQGGEYWRFYRAPPRKKAVL.

37-42 (SGGSDS) contributes to the ATP binding site.

It belongs to the tRNA(Ile)-lysidine synthase family.

The protein localises to the cytoplasm. The catalysed reaction is cytidine(34) in tRNA(Ile2) + L-lysine + ATP = lysidine(34) in tRNA(Ile2) + AMP + diphosphate + H(+). Its function is as follows. Ligates lysine onto the cytidine present at position 34 of the AUA codon-specific tRNA(Ile) that contains the anticodon CAU, in an ATP-dependent manner. Cytidine is converted to lysidine, thus changing the amino acid specificity of the tRNA from methionine to isoleucine. The polypeptide is tRNA(Ile)-lysidine synthase (Zymomonas mobilis subsp. mobilis (strain ATCC 31821 / ZM4 / CP4)).